Reading from the N-terminus, the 47-residue chain is Large ribosomal subunit protein bL34 (47 aa).

This sequence belongs to the bacterial ribosomal protein bL34 family.

This Rhodococcus opacus (strain B4) protein is Large ribosomal subunit protein bL34.